The sequence spans 527 residues: Glucose-6-phosphate isomerase (527 aa).

The Proton donor role is filled by E323. Active-site residues include H352 and K454.

It belongs to the GPI family.

It localises to the cytoplasm. It carries out the reaction alpha-D-glucose 6-phosphate = beta-D-fructose 6-phosphate. Its pathway is carbohydrate biosynthesis; gluconeogenesis. It functions in the pathway carbohydrate degradation; glycolysis; D-glyceraldehyde 3-phosphate and glycerone phosphate from D-glucose: step 2/4. In terms of biological role, catalyzes the reversible isomerization of glucose-6-phosphate to fructose-6-phosphate. The polypeptide is Glucose-6-phosphate isomerase (Prochlorococcus marinus (strain MIT 9515)).